Here is a 119-residue protein sequence, read N- to C-terminus: Large ribosomal subunit protein uL14m (119 aa).

Belongs to the universal ribosomal protein uL14 family.

It is found in the mitochondrion. In Tetrahymena pyriformis, this protein is Large ribosomal subunit protein uL14m.